A 987-amino-acid chain; its full sequence is UvrABC system protein A (987 aa).

ATP is bound at residue 33-40 (GLSGSGKS). The C4-type zinc finger occupies 255-282 (CPVCDYSLPELEPRLFSFNAPVGACPSC). 2 ABC transporter domains span residues 312–589 (WDRR…PRSL) and 609–938 (PNPK…QFLA). 642 to 649 (GVSGSGKS) contributes to the ATP binding site. The C4-type zinc-finger motif lies at 741–767 (CEACQGDGMIKVEMHFLPDVYVPCDVC). The disordered stretch occupies residues 948 to 987 (ETRPAAMANKPDARPPRKVKPEKVAKAAKSATKKTAKKAS). The segment covering 958 to 972 (PDARPPRKVKPEKVA) has biased composition (basic and acidic residues). Basic residues predominate over residues 978-987 (ATKKTAKKAS).

Belongs to the ABC transporter superfamily. UvrA family. Forms a heterotetramer with UvrB during the search for lesions.

It localises to the cytoplasm. Functionally, the UvrABC repair system catalyzes the recognition and processing of DNA lesions. UvrA is an ATPase and a DNA-binding protein. A damage recognition complex composed of 2 UvrA and 2 UvrB subunits scans DNA for abnormalities. When the presence of a lesion has been verified by UvrB, the UvrA molecules dissociate. The sequence is that of UvrABC system protein A from Xanthomonas axonopodis pv. citri (strain 306).